Reading from the N-terminus, the 369-residue chain is Superinfection exclusion protein (369 aa).

Residues methionine 1 to threonine 15 form the signal peptide.

It belongs to the serpin family. Orthopoxvirus OPG040 subfamily. Interacts with OPG185/A56 protein.

The protein localises to the virion membrane. Its subcellular location is the host cell membrane. Functionally, negatively regulates superinfection and syncytium formation in infected host cells. Acts in concert with OPG185/A56 protein at the host cell membrane by interacting with and inhibiting the mature virion entry/fusion complex (EFC). This mechanism ensures that new virions released from the cell cannot enter already infected cells. This Vaccinia virus (strain Western Reserve) (VACV) protein is Superinfection exclusion protein (OPG040).